Reading from the N-terminus, the 190-residue chain is Guanylate kinase (190 aa).

Residues 3–185 (NYIFIISAPS…SLEQLCKYFE (183 aa)) form the Guanylate kinase-like domain. Residue 10-17 (APSGAGKS) coordinates ATP.

The protein belongs to the guanylate kinase family.

The protein localises to the cytoplasm. It carries out the reaction GMP + ATP = GDP + ADP. In terms of biological role, essential for recycling GMP and indirectly, cGMP. This is Guanylate kinase from Francisella tularensis subsp. holarctica (strain OSU18).